A 146-amino-acid polypeptide reads, in one-letter code: Peptide methionine sulfoxide reductase MsrB (146 aa).

The 124-residue stretch at 2–125 (LKKNKDELND…NSAAVQFIPY (124 aa)) folds into the MsrB domain. Residue Cys114 is the Nucleophile of the active site.

This sequence belongs to the MsrB Met sulfoxide reductase family.

It catalyses the reaction L-methionyl-[protein] + [thioredoxin]-disulfide + H2O = L-methionyl-(R)-S-oxide-[protein] + [thioredoxin]-dithiol. This chain is Peptide methionine sulfoxide reductase MsrB, found in Staphylococcus carnosus (strain TM300).